A 309-amino-acid polypeptide reads, in one-letter code: Replication factor C subunit 4 (309 aa).

ATP contacts are provided by residues valine 5, valine 17, 42 to 50 (GPPGTGKTT), asparagine 134, and arginine 192.

The protein belongs to the activator 1 small subunits family. Component of the replication factor C (RFC) complex.

Its subcellular location is the nucleus. Component of ATP-dependent clamp loader (RFC and RFC-like) complexes for DNA clamps. During a clamp loading circle, the RFC:clamp complex binds to DNA and the recognition of the double-stranded/single-stranded junction stimulates ATP hydrolysis by RFC. The complex presumably provides bipartite ATP sites in which one subunit supplies a catalytic site for hydrolysis of ATP bound to the neighboring subunit. Dissociation of RFC from the clamp leaves the clamp encircling DNA. Component of the replication factor C (RFC or activator 1) complex which acts during elongation of primed DNA templates by DNA polymerase delta and epsilon. RFC has an essential but redundant activity in sister chromatid cohesion establishment. This chain is Replication factor C subunit 4 (RFC4), found in Encephalitozoon cuniculi (strain GB-M1) (Microsporidian parasite).